We begin with the raw amino-acid sequence, 354 residues long: Uroporphyrinogen decarboxylase (354 aa).

Residues 27-31, F46, D77, Y154, S209, and H327 contribute to the substrate site; that span reads RQAGR.

The protein belongs to the uroporphyrinogen decarboxylase family. In terms of assembly, homodimer.

The protein resides in the cytoplasm. The catalysed reaction is uroporphyrinogen III + 4 H(+) = coproporphyrinogen III + 4 CO2. It functions in the pathway porphyrin-containing compound metabolism; protoporphyrin-IX biosynthesis; coproporphyrinogen-III from 5-aminolevulinate: step 4/4. In terms of biological role, catalyzes the decarboxylation of four acetate groups of uroporphyrinogen-III to yield coproporphyrinogen-III. The chain is Uroporphyrinogen decarboxylase from Pseudomonas syringae pv. tomato (strain ATCC BAA-871 / DC3000).